Reading from the N-terminus, the 303-residue chain is Porphobilinogen deaminase (303 aa).

C241 carries the S-(dipyrrolylmethanemethyl)cysteine modification.

Belongs to the HMBS family. Monomer. The cofactor is dipyrromethane.

It carries out the reaction 4 porphobilinogen + H2O = hydroxymethylbilane + 4 NH4(+). It participates in porphyrin-containing compound metabolism; protoporphyrin-IX biosynthesis; coproporphyrinogen-III from 5-aminolevulinate: step 2/4. The protein operates within porphyrin-containing compound metabolism; chlorophyll biosynthesis. Functionally, tetrapolymerization of the monopyrrole PBG into the hydroxymethylbilane pre-uroporphyrinogen in several discrete steps. The polypeptide is Porphobilinogen deaminase (Roseiflexus sp. (strain RS-1)).